Consider the following 179-residue polypeptide: Acireductone dioxygenase (179 aa).

The Fe(2+) site is built by histidine 100, histidine 102, glutamate 106, and histidine 145. Histidine 100, histidine 102, glutamate 106, and histidine 145 together coordinate Ni(2+).

Belongs to the acireductone dioxygenase (ARD) family. As to quaternary structure, monomer. The cofactor is Fe(2+). Ni(2+) is required as a cofactor.

It carries out the reaction 1,2-dihydroxy-5-(methylsulfanyl)pent-1-en-3-one + O2 = 3-(methylsulfanyl)propanoate + CO + formate + 2 H(+). The enzyme catalyses 1,2-dihydroxy-5-(methylsulfanyl)pent-1-en-3-one + O2 = 4-methylsulfanyl-2-oxobutanoate + formate + 2 H(+). Its pathway is amino-acid biosynthesis; L-methionine biosynthesis via salvage pathway; L-methionine from S-methyl-5-thio-alpha-D-ribose 1-phosphate: step 5/6. In terms of biological role, catalyzes 2 different reactions between oxygen and the acireductone 1,2-dihydroxy-3-keto-5-methylthiopentene (DHK-MTPene) depending upon the metal bound in the active site. Fe-containing acireductone dioxygenase (Fe-ARD) produces formate and 2-keto-4-methylthiobutyrate (KMTB), the alpha-ketoacid precursor of methionine in the methionine recycle pathway. Ni-containing acireductone dioxygenase (Ni-ARD) produces methylthiopropionate, carbon monoxide and formate, and does not lie on the methionine recycle pathway. In Bacillus licheniformis (strain ATCC 14580 / DSM 13 / JCM 2505 / CCUG 7422 / NBRC 12200 / NCIMB 9375 / NCTC 10341 / NRRL NRS-1264 / Gibson 46), this protein is Acireductone dioxygenase.